The primary structure comprises 335 residues: Ferredoxin--NADP reductase (335 aa).

FAD contacts are provided by Asp34, Gln42, Tyr47, Ala87, Phe121, Asp287, and Thr328.

The protein belongs to the ferredoxin--NADP reductase type 2 family. As to quaternary structure, homodimer. FAD serves as cofactor.

The enzyme catalyses 2 reduced [2Fe-2S]-[ferredoxin] + NADP(+) + H(+) = 2 oxidized [2Fe-2S]-[ferredoxin] + NADPH. The sequence is that of Ferredoxin--NADP reductase from Rickettsia felis (strain ATCC VR-1525 / URRWXCal2) (Rickettsia azadi).